Reading from the N-terminus, the 67-residue chain is Large ribosomal subunit protein uL29 (67 aa).

It belongs to the universal ribosomal protein uL29 family.

In Acetivibrio thermocellus (strain ATCC 27405 / DSM 1237 / JCM 9322 / NBRC 103400 / NCIMB 10682 / NRRL B-4536 / VPI 7372) (Clostridium thermocellum), this protein is Large ribosomal subunit protein uL29.